The sequence spans 148 residues: Large ribosomal subunit protein uL13 (148 aa).

Belongs to the universal ribosomal protein uL13 family. In terms of assembly, part of the 50S ribosomal subunit.

This protein is one of the early assembly proteins of the 50S ribosomal subunit, although it is not seen to bind rRNA by itself. It is important during the early stages of 50S assembly. The protein is Large ribosomal subunit protein uL13 of Ureaplasma parvum serovar 3 (strain ATCC 27815 / 27 / NCTC 11736).